Reading from the N-terminus, the 418-residue chain is E3 ubiquitin-protein ligase pellino homolog 1 (418 aa).

Residues 13–200 form the FHA; atypical domain; the sequence is APVKYGELIV…MHPRNGFTED (188 aa). Position 121 is a phosphoserine (Ser-121). Phosphothreonine is present on Thr-127. The segment at 311–399 is ring-like domain; necessary for ubiquitination of RIPK3; sequence CGHVHGYHNW…TFHAACPFCA (89 aa).

Belongs to the pellino family. In terms of assembly, interacts with MAP3K7. Upon IL1B treatment, forms a complex with TRAF6, IRAK1, IRAK4 and MYD88; this complex recruits MAP3K7/TAK1, TAB1 and TAB2 to mediate NF-kappa-B activation. Direct binding of SMAD6 to PELI1 prevents the complex formation and hence negatively regulates IL1R-TLR signaling and eventually NF-kappa-B-mediated gene expression. Interacts (via atypical FHA domain) with RIPK3. Binds preferentially to the 'Thr-182' phosphorylated form of RIPK3. Interacts with RIPK1. Post-translationally, phosphorylation by IRAK1 and IRAK4 enhances its E3 ligase activity. Phosphorylated by ATM in response to DNA damage, promoting localization to DNA double-strand breaks (DSBs) and ability to mediate 'Lys-63'-linked ubiquitination of NBN. Sumoylated.

The protein resides in the chromosome. It carries out the reaction S-ubiquitinyl-[E2 ubiquitin-conjugating enzyme]-L-cysteine + [acceptor protein]-L-lysine = [E2 ubiquitin-conjugating enzyme]-L-cysteine + N(6)-ubiquitinyl-[acceptor protein]-L-lysine.. It participates in protein modification; protein ubiquitination. In terms of biological role, E3 ubiquitin ligase catalyzing the covalent attachment of ubiquitin moieties onto substrate proteins. Involved in the TLR and IL-1 signaling pathways via interaction with the complex containing IRAK kinases and TRAF6. Acts as a positive regulator of inflammatory response in microglia through activation of NF-kappa-B and MAP kinase. Mediates 'Lys-63'-linked polyubiquitination of IRAK1 allowing subsequent NF-kappa-B activation. Conjugates 'Lys-63'-linked ubiquitin chains to the adapter protein ASC/PYCARD, which in turn is crucial for NLRP3 inflammasome activation. Mediates 'Lys-48'-linked polyubiquitination of RIPK3 leading to its subsequent proteasome-dependent degradation; preferentially recognizes and mediates the degradation of the 'Thr-182' phosphorylated form of RIPK3. Negatively regulates necroptosis by reducing RIPK3 expression. Mediates 'Lys-63'-linked ubiquitination of RIPK1. Following phosphorylation by ATM, catalyzes 'Lys-63'-linked ubiquitination of NBN, promoting DNA repair via homologous recombination. Negatively regulates activation of the metabolic mTORC1 signaling pathway by mediating 'Lys-63'-linked ubiquitination of mTORC1-inhibitory protein TSC1 and thereby promoting TSC1/TSC2 complex stability. The chain is E3 ubiquitin-protein ligase pellino homolog 1 (Peli1) from Mus musculus (Mouse).